The primary structure comprises 321 residues: Ribose-phosphate pyrophosphokinase 2 (321 aa).

Aspartate 130, histidine 132, and aspartate 145 together coordinate Mg(2+). Serine 172 is modified (phosphoserine).

The protein belongs to the ribose-phosphate pyrophosphokinase family.

Its subcellular location is the cytoplasm. The catalysed reaction is D-ribose 5-phosphate + ATP = 5-phospho-alpha-D-ribose 1-diphosphate + AMP + H(+). Its pathway is metabolic intermediate biosynthesis; 5-phospho-alpha-D-ribose 1-diphosphate biosynthesis; 5-phospho-alpha-D-ribose 1-diphosphate from D-ribose 5-phosphate (route I): step 1/1. In terms of biological role, 5-phosphoribose 1-diphosphate synthase involved in nucleotide, histidine, and tryptophan biosynthesis. Active in heteromultimeric complexes with other 5-phosphoribose 1-diphosphate synthases. This is Ribose-phosphate pyrophosphokinase 2 from Schizosaccharomyces pombe (strain 972 / ATCC 24843) (Fission yeast).